We begin with the raw amino-acid sequence, 442 residues long: FBD-associated F-box protein At1g66310 (442 aa).

The 47-residue stretch at 18–64 folds into the F-box domain; that stretch reads VDWLRDLPESLLCHILLNLPTKDVVKTSVLSSKWRNLWRLVPGLDLD. The region spanning 363–415 is the FBD domain; the sequence is KRRTSVLSGPRRLLSSLEYVEIESPLTGEVFEMKLVSYLLENSPILKKLTINL.

The chain is FBD-associated F-box protein At1g66310 from Arabidopsis thaliana (Mouse-ear cress).